The following is a 428-amino-acid chain: Adenylosuccinate synthetase (428 aa).

GTP contacts are provided by residues 11–17 (GDEGKGK) and 39–41 (GHT). Aspartate 12 functions as the Proton acceptor in the catalytic mechanism. Residues aspartate 12 and glycine 39 each coordinate Mg(2+). IMP is bound by residues 12–15 (DEGK), 37–40 (NAGH), threonine 130, arginine 144, asparagine 226, threonine 241, and arginine 305. The active-site Proton donor is the histidine 40. Substrate is bound at residue 301–307 (VTTGRKR). Residues arginine 307, 333–335 (KLD), and 415–417 (GTG) contribute to the GTP site.

It belongs to the adenylosuccinate synthetase family. In terms of assembly, homodimer. The cofactor is Mg(2+).

The protein localises to the cytoplasm. The catalysed reaction is IMP + L-aspartate + GTP = N(6)-(1,2-dicarboxyethyl)-AMP + GDP + phosphate + 2 H(+). It functions in the pathway purine metabolism; AMP biosynthesis via de novo pathway; AMP from IMP: step 1/2. Functionally, plays an important role in the de novo pathway and in the salvage pathway of purine nucleotide biosynthesis. Catalyzes the first committed step in the biosynthesis of AMP from IMP. The polypeptide is Adenylosuccinate synthetase (Candida albicans (strain SC5314 / ATCC MYA-2876) (Yeast)).